The chain runs to 231 residues: Cuticle protein LPCP-23 (231 aa).

A signal peptide spans 1–17 (MAFKFVVFAAALAYANA). Tandem repeats lie at residues 130–133 (AAPV) and 199–202 (AAPV).

In terms of biological role, component of the cuticle of Tenebrio molitor. The polypeptide is Cuticle protein LPCP-23 (LPCP-23) (Tenebrio molitor (Yellow mealworm beetle)).